The primary structure comprises 356 residues: Mitogen-activated protein kinase PMK1 (356 aa).

In terms of domain architecture, Protein kinase spans 24–312 (YDIQDVVGEG…VEEALKHPYL (289 aa)). ATP contacts are provided by residues 30–38 (VGEGAYGVV) and Lys-53.

It belongs to the protein kinase superfamily. CMGC Ser/Thr protein kinase family. MAP kinase subfamily. It depends on Mg(2+) as a cofactor. Post-translationally, phosphorylated by MST7.

The catalysed reaction is L-seryl-[protein] + ATP = O-phospho-L-seryl-[protein] + ADP + H(+). It catalyses the reaction L-threonyl-[protein] + ATP = O-phospho-L-threonyl-[protein] + ADP + H(+). Its function is as follows. Mitogen-activated protein kinase; part of the MST11-MST7-PMK1 MAP kinase (MAPK) cascade that is essential for appressorium formation, penetration and invasive growth. Central regulator of appressorium development that acts downstream of the cAMP signal. The MST11-MST7-PMK1 MAP kinase cascade transduces signals from the cell surface sensors MDB2 and SHO1 that recognize various surface signals such as surface hydrophobicity, cutin monomers, and rice leaf waxes. Regulates expression of secreted fungal effector proteins implicated of host immune defenses, preventing reactive oxygen species generation and excessive callose deposition at plasmodesmata. Furthermore, controls the hyphal constriction required for fungal growth from one rice cell to the neighboring cell, enabling host tissue colonization and blast disease. Targets downstream of the PMK1-MAPK pathway include transcription factor MST12 and pathogenicity-related genes GAS1 and GAS2, both of which are expressed during appressorium formation, even if regulation of MST12 is not associated with expression of GAS1 or GAS2. The sequence is that of Mitogen-activated protein kinase PMK1 from Pyricularia oryzae (Rice blast fungus).